A 145-amino-acid chain; its full sequence is Large ribosomal subunit protein uL14m (145 aa).

A mitochondrion-targeting transit peptide spans 1–30 (MAFSSGLWGPCVHMSRAFSQRCFSTTGSLG).

The protein belongs to the universal ribosomal protein uL14 family. Component of the mitochondrial ribosome large subunit (39S) which comprises a 16S rRNA and about 50 distinct proteins. Interacts with MALSU1.

The protein localises to the mitochondrion. In terms of biological role, may form part of 2 intersubunit bridges in the assembled ribosome. Upon binding to MALSU1, intersubunit bridge formation is blocked, preventing ribosome formation and repressing translation. In Bos taurus (Bovine), this protein is Large ribosomal subunit protein uL14m (MRPL14).